A 97-amino-acid chain; its full sequence is uncharacterized protein (97 aa).

The protein to B.licheniformis xpaL1 and to B.subtilis XhlA.

This is an uncharacterized protein from Bacillus licheniformis.